Consider the following 876-residue polypeptide: Neurotrypsin (876 aa).

The first 20 residues, 1-20 (MTLARFVLALMLGALPEVVG), serve as a signal peptide directing secretion. Asn26 is a glycosylation site (N-linked (GlcNAc...) asparagine). A disordered region spans residues 29–89 (LHHSHRHSPP…ALQAGHTPRP (61 aa)). A compositionally biased stretch (low complexity) spans 43–54 (YPSYYLPTQQRP). The segment covering 57-72 (TRPPPPLPRFPRPPRA) has biased composition (pro residues). Residues 94-166 (CPAGEPWVSV…GKVDWGYCDC (73 aa)) form the Kringle domain. Disulfide bonds link Cys94/Cys166, Cys110/Cys150, Cys139/Cys164, Cys196/Cys260, Cys209/Cys270, Cys240/Cys250, Cys306/Cys370, Cys319/Cys380, Cys350/Cys360, Cys413/Cys476, Cys426/Cys486, Cys456/Cys466, Cys526/Cys590, Cys539/Cys600, Cys570/Cys580, Cys620/Cys751, Cys662/Cys678, Cys766/Cys832, Cys795/Cys809, and Cys822/Cys851. SRCR domains are found at residues 171 to 272 (VRLR…TCSF), 281 to 382 (IRLA…SCTP), 388 to 488 (IRLA…ACYP), and 501 to 602 (VRLM…ICDY). The interval 620-631 (CGLRLLHRRQKR) is zymogen activation region. One can recognise a Peptidase S1 domain in the interval 632–875 (IIGGKNSLRG…FVPWIKSVTK (244 aa)). Residue His677 is the Charge relay system of the active site. N-linked (GlcNAc...) asparagine glycosylation is present at Asn684. Asp727 (charge relay system) is an active-site residue. The active-site Charge relay system is Ser826.

It belongs to the peptidase S1 family.

The protein resides in the secreted. In terms of biological role, plays a role in neuronal plasticity and the proteolytic action may subserve structural reorganizations associated with learning and memory operations. The sequence is that of Neurotrypsin (PRSS12) from Gorilla gorilla gorilla (Western lowland gorilla).